Reading from the N-terminus, the 163-residue chain is Norbelladine synthase (163 aa).

Residue 68-71 coordinates tyramine; it reads YHKE. Catalysis depends on Lys83, which acts as the Proton donor.

This sequence belongs to the BetVI family. In terms of tissue distribution, mostly expressed in bulbs, and, to a lower extent, in roots, stems, leaves and flowers.

It catalyses the reaction 3,4-dihydroxybenzaldehyde + tyramine + AH2 = norbelladine + A + H2O. It participates in alkaloid biosynthesis. In terms of biological role, catalyzes the condensation of tyramine and 3,4-dihydroxybenzaldehyde (3,4-DHBA) to form norbelladine, the common precursor to all Amaryllidaceae alkaloids such as galanthamine, lycorine and haemanthamine, and including haemanthamine- and crinamine-type alkaloids, promising anticancer agents. The protein is Norbelladine synthase of Narcissus pseudonarcissus (Daffodil).